A 299-amino-acid chain; its full sequence is Acetylglutamate kinase (299 aa).

Substrate contacts are provided by residues 68 to 69, Arg-90, and Asn-194; that span reads GG.

It belongs to the acetylglutamate kinase family. ArgB subfamily.

It is found in the cytoplasm. The catalysed reaction is N-acetyl-L-glutamate + ATP = N-acetyl-L-glutamyl 5-phosphate + ADP. The protein operates within amino-acid biosynthesis; L-arginine biosynthesis; N(2)-acetyl-L-ornithine from L-glutamate: step 2/4. Functionally, catalyzes the ATP-dependent phosphorylation of N-acetyl-L-glutamate. This is Acetylglutamate kinase from Psychrobacter cryohalolentis (strain ATCC BAA-1226 / DSM 17306 / VKM B-2378 / K5).